An 875-amino-acid chain; its full sequence is Protein HIR2 (875 aa).

6 WD repeats span residues 10-47, 118-158, 163-201, 237-277, 278-316, and 320-359; these read IHNEQVNALAALGPYIILAGSGGHVMAWRQQQLVDTAF, KSPS…KLSE, KASKPITGIIDPTGQTFTVMTSDRSILVYQINKTGTHKL, PNNA…PAFY, EKPNLKKGTSTRYNLIATSGSTDGTILVWNTKRMKPLFN, and VSSTAINDMSWSQDGFTLFAISNDATLYTFAFQEKDLGVA. Residues 398 to 473 form a disordered region; the sequence is ESASAAPIPN…IAPGSKKQKK (76 aa). Residues 424 to 446 show a composition bias toward polar residues; sequence ANNQTNGIKTIQSTSMEFNTPSY. WD repeat units lie at residues 546 to 587 and 589 to 626; these read LFQD…LMAP and VLGVSISFLEACGTYLLCLTSIGELYCWNIEQKKLAFP. A Phosphoserine modification is found at Ser713.

Belongs to the WD repeat HIR1 family. As to quaternary structure, component of the HIR complex, composed of HIR1, HIR2, HIR3 and HPC2. This complex may consist of one copy of HIR1 and HIR3 and two copies of HIR2 and HPC2. The HIR complex interacts with ASF1. Interacts with SNF2. Interacts with SNF5. Interacts with SWI3. Interacts with RTT106.

It localises to the nucleus. The protein resides in the chromosome. In terms of biological role, component of the HIR complex, which cooperates with ASF1 to promote replication-independent chromatin assembly. The HIR complex is also required for the periodic repression of three of the four histone gene loci during the cell cycle as well as for autogenous regulation of the HTA1-HTB1 locus by H2A and H2B. DNA-binding by the HIR complex may repress transcription by inhibiting nucleosome remodeling by the SWI/SNF complex. The HIR complex may also be required for transcriptional silencing of centromeric, telomeric and mating-type loci in the absence of CAF-1. In Saccharomyces cerevisiae (strain ATCC 204508 / S288c) (Baker's yeast), this protein is Protein HIR2 (HIR2).